The primary structure comprises 543 residues: Putative pectinesterase/pectinesterase inhibitor 22 (543 aa).

The N-terminal stretch at 1–19 is a signal peptide; that stretch reads MGITTALLLVMLMSVHTSS. The interval 38–197 is pectinesterase inhibitor 22; the sequence is AKACQFIDAH…TQLVSNVLDM (160 aa). 2 N-linked (GlcNAc...) asparagine glycosylation sites follow: N211 and N263. The interval 240-527 is pectinesterase 22; that stretch reads NTVVAIDGKG…FTVGSFIDGR (288 aa). Residues T315 and Q345 each coordinate substrate. D368 acts as the Proton donor; for pectinesterase activity in catalysis. C382 and C402 are joined by a disulfide. D389 acts as the Nucleophile; for pectinesterase activity in catalysis. Residues R448 and W450 each coordinate substrate.

This sequence in the N-terminal section; belongs to the PMEI family. In the C-terminal section; belongs to the pectinesterase family.

The protein localises to the secreted. It localises to the cell wall. It catalyses the reaction [(1-&gt;4)-alpha-D-galacturonosyl methyl ester](n) + n H2O = [(1-&gt;4)-alpha-D-galacturonosyl](n) + n methanol + n H(+). Its pathway is glycan metabolism; pectin degradation; 2-dehydro-3-deoxy-D-gluconate from pectin: step 1/5. Its function is as follows. Acts in the modification of cell walls via demethylesterification of cell wall pectin. This chain is Putative pectinesterase/pectinesterase inhibitor 22 (PME22), found in Arabidopsis thaliana (Mouse-ear cress).